The following is a 319-amino-acid chain: Ribosomal RNA small subunit methyltransferase H (319 aa).

Residues 35-37 (AGH), D55, F84, D104, and Q111 each bind S-adenosyl-L-methionine.

This sequence belongs to the methyltransferase superfamily. RsmH family.

The protein resides in the cytoplasm. It catalyses the reaction cytidine(1402) in 16S rRNA + S-adenosyl-L-methionine = N(4)-methylcytidine(1402) in 16S rRNA + S-adenosyl-L-homocysteine + H(+). Specifically methylates the N4 position of cytidine in position 1402 (C1402) of 16S rRNA. The polypeptide is Ribosomal RNA small subunit methyltransferase H (Enterococcus hirae).